Consider the following 596-residue polypeptide: PDZ and LIM domain protein 5 (596 aa).

An N-acetylserine modification is found at serine 2. Serine 2 carries the post-translational modification Phosphoserine. Positions 2–85 (SNYSVSLVGP…SLNMTLQRAS (84 aa)) constitute a PDZ domain. Lysine 89 bears the N6-acetyllysine; alternate mark. Lysine 89 bears the N6-succinyllysine; alternate mark. A Glycyl lysine isopeptide (Lys-Gly) (interchain with G-Cter in SUMO2); alternate cross-link involves residue lysine 89. Phosphoserine is present on residues serine 111, serine 134, and serine 137. Disordered stretches follow at residues 121–165 (NNMA…SPSP), 196–240 (AGKT…GPPR), and 255–340 (THSD…RPGV). Polar residues predominate over residues 134–143 (SVSSPKVTSI). Residues 144–165 (PSPSSAFTPAHATTSSHASPSP) are compositionally biased toward low complexity. 2 stretches are compositionally biased toward polar residues: residues 205-219 (RQPT…TSQE) and 226-237 (RGSQGDSKQQNG). 2 positions are modified to phosphoserine: serine 228 and serine 260. Basic and acidic residues-rich tracts occupy residues 258–273 (DASK…DWRP) and 293–304 (EHLKESEADNTK). Residues 305 to 335 (KANNSQEPSPQLASSVASTRSMPESLDSPTS) show a composition bias toward polar residues. Residues serine 309, serine 313, and serine 322 each carry the phosphoserine modification. Residue lysine 350 is modified to N6-acetyllysine. The segment at 354 to 381 (STGVIKSPSWQRPNQGVPSTGRISNSAT) is disordered. 2 positions are modified to phosphoserine: serine 360 and serine 362. The segment covering 361-381 (PSWQRPNQGVPSTGRISNSAT) has biased composition (polar residues). 3 LIM zinc-binding domains span residues 418-477 (PMCA…FFAP), 477-536 (PECG…LFGT), and 536-596 (TICH…SVNF).

Interacts with various PKC isoforms through the LIM domains. Interacts with actin and alpha-actinin through the PDZ domain. Interacts (via LIM domains) with SIPA1L1/SPAR; this interaction may occur preferentially with isoform 1. In terms of tissue distribution, heart and skeletal muscle specific. Expression is commonly increased in the brain of patients with bipolar disorder, schizophrenia, and major depression.

It localises to the postsynaptic density. Its subcellular location is the presynapse. The protein localises to the postsynapse. It is found in the cytoplasm. The protein resides in the cytosol. Its function is as follows. May play an important role in the heart development by scaffolding PKC to the Z-disk region. May play a role in the regulation of cardiomyocyte expansion. Isoforms lacking the LIM domains may negatively modulate the scaffolding activity of isoform 1. Overexpression promotes the development of heart hypertrophy. Contributes to the regulation of dendritic spine morphogenesis in neurons. May be required to restrain postsynaptic growth of excitatory synapses. Isoform 1, but not isoform 2, expression favors spine thinning and elongation. This Homo sapiens (Human) protein is PDZ and LIM domain protein 5.